The chain runs to 403 residues: Acetate kinase (403 aa).

Position 7 (Asn7) interacts with Mg(2+). Lys14 is a binding site for ATP. Residue Arg97 coordinates substrate. Catalysis depends on Asp154, which acts as the Proton donor/acceptor. Residues 213-217 (HLGNG), 287-289 (DMR), and 335-339 (GIGEN) contribute to the ATP site. Position 388 (Glu388) interacts with Mg(2+).

This sequence belongs to the acetokinase family. As to quaternary structure, homodimer. The cofactor is Mg(2+). Requires Mn(2+) as cofactor.

The protein localises to the cytoplasm. It carries out the reaction acetate + ATP = acetyl phosphate + ADP. It participates in metabolic intermediate biosynthesis; acetyl-CoA biosynthesis; acetyl-CoA from acetate: step 1/2. In terms of biological role, catalyzes the formation of acetyl phosphate from acetate and ATP. Can also catalyze the reverse reaction. This Synechococcus sp. (strain JA-2-3B'a(2-13)) (Cyanobacteria bacterium Yellowstone B-Prime) protein is Acetate kinase.